We begin with the raw amino-acid sequence, 97 residues long: Putative regulatory protein Dole_1911 (97 aa).

Belongs to the RemA family.

The chain is Putative regulatory protein Dole_1911 from Desulfosudis oleivorans (strain DSM 6200 / JCM 39069 / Hxd3) (Desulfococcus oleovorans).